We begin with the raw amino-acid sequence, 481 residues long: Cardiolipin synthase A (481 aa).

Helical transmembrane passes span 10 to 30 (FFGYLLGLIHLLGIVAALHAL) and 40 to 60 (IAWAMPLLFIPYLTLIPYLIF). PLD phosphodiesterase domains lie at 220–247 (VNFRNHRKIVVVDGLLGFIGGHNVGDEY) and 394–421 (QPGFLHQKVVLVDDDVSAIGSANLDNRS). Catalysis depends on residues His-225, Lys-227, Asp-232, His-399, Lys-401, and Asp-406.

Belongs to the phospholipase D family. Cardiolipin synthase subfamily. ClsA sub-subfamily.

The protein localises to the cell inner membrane. The enzyme catalyses 2 a 1,2-diacyl-sn-glycero-3-phospho-(1'-sn-glycerol) = a cardiolipin + glycerol. Functionally, catalyzes the reversible phosphatidyl group transfer from one phosphatidylglycerol molecule to another to form cardiolipin (CL) (diphosphatidylglycerol) and glycerol. The sequence is that of Cardiolipin synthase A from Pseudomonas putida (strain ATCC 47054 / DSM 6125 / CFBP 8728 / NCIMB 11950 / KT2440).